Consider the following 419-residue polypeptide: MGHYFMLNLLKKLPFYEKTWFQFILFVLRRFEADRCREHAGALTYTTLFAVVPMLTVFLVIISSIKALEPARQQLQQLIYSNFLPKSTIAFDRVLNSFTEKSSNLTVIGILFLFVTTVMMLSTIETAFNRIWRVKETRSGIIGFMRYWTIISLGPIILGSAFVISSTVASMNILSNNFAGYELSGAFILWLISFGLTILGFFILYWTIPNRTVPMYAAIIAACFSAAIFELLKNIFGFAMSNFTSYELVYGAFAAIPIFLLWIFLSWNIVLLGVEVSYALTAFHSDKIQTRHPVLMLLDVLELFYKKQKLGQSVTDLEALDIMGRGEIGRWPSYIELLEKQNLIKRTDKDEYVLVRNLSQVDFWTFFTALPYPLPLRKDVGNIHPDDEWMQKIGPALIEADDYLAAKLSIPLSTLFEAK.

The next 6 membrane-spanning stretches (helical) occupy residues 42–62, 105–125, 148–168, 186–206, 212–232, and 252–272; these read ALTY…LVII, LTVI…STIE, WTII…SSTV, AFIL…ILYW, TVPM…FELL, and AFAA…IVLL.

The protein belongs to the UPF0761 family.

Its subcellular location is the cell inner membrane. The polypeptide is UPF0761 membrane protein ACIAD3168 (Acinetobacter baylyi (strain ATCC 33305 / BD413 / ADP1)).